We begin with the raw amino-acid sequence, 159 residues long: Antitoxin Xre (159 aa).

Belongs to the MbcA/ParS/Xre antitoxin family. Homodimer. Forms a complex with cognate toxin Res; the 2 toxin molecules dimerize and each contacts an Xre homodimer. Most Res-Xre contacts are between the antitoxin molecule closest to the toxin.

Functionally, probable antitoxin component of a type II toxin-antitoxin (TA) system. In vivo probably neutralizes the toxic effect of cognate toxin Res. This chain is Antitoxin Xre, found in Pseudomonas putida (strain ATCC 47054 / DSM 6125 / CFBP 8728 / NCIMB 11950 / KT2440).